The sequence spans 395 residues: Small RNA 2'-O-methyltransferase (395 aa).

Aspartate 79 and serine 115 together coordinate S-adenosyl-L-methionine. The Mg(2+) site is built by glutamate 133, glutamate 136, histidine 137, and histidine 182.

This sequence belongs to the methyltransferase superfamily. HEN1 family. Mg(2+) is required as a cofactor. In terms of tissue distribution, specifically expressed in testis.

The protein localises to the cytoplasm. It catalyses the reaction small RNA 3'-end nucleotide + S-adenosyl-L-methionine = small RNA 3'-end 2'-O-methylnucleotide + S-adenosyl-L-homocysteine + H(+). Its function is as follows. Methyltransferase that adds a 2'-O-methyl group at the 3'-end of piRNAs, a class of 24 to 30 nucleotide RNAs that are generated by a Dicer-independent mechanism and are primarily derived from transposons and other repeated sequence elements. This probably protects the 3'-end of piRNAs from uridylation activity and subsequent degradation. Stabilization of piRNAs is essential for gametogenesis. The polypeptide is Small RNA 2'-O-methyltransferase (Henmt1) (Mus musculus (Mouse)).